Here is a 173-residue protein sequence, read N- to C-terminus: Co-chaperone protein HscB homolog (173 aa).

One can recognise a J domain in the interval 5–77; sequence CHFAQFDLQP…PRRALYLLTL (73 aa).

This sequence belongs to the HscB family. Interacts with HscA and stimulates its ATPase activity.

Functionally, co-chaperone involved in the maturation of iron-sulfur cluster-containing proteins. Seems to help targeting proteins to be folded toward HscA. This is Co-chaperone protein HscB homolog from Pseudomonas paraeruginosa (strain DSM 24068 / PA7) (Pseudomonas aeruginosa (strain PA7)).